Consider the following 257-residue polypeptide: Imidazole glycerol phosphate synthase subunit HisF (257 aa).

Residues D11 and D130 contribute to the active site.

Belongs to the HisA/HisF family. Heterodimer of HisH and HisF.

It is found in the cytoplasm. It carries out the reaction 5-[(5-phospho-1-deoxy-D-ribulos-1-ylimino)methylamino]-1-(5-phospho-beta-D-ribosyl)imidazole-4-carboxamide + L-glutamine = D-erythro-1-(imidazol-4-yl)glycerol 3-phosphate + 5-amino-1-(5-phospho-beta-D-ribosyl)imidazole-4-carboxamide + L-glutamate + H(+). The protein operates within amino-acid biosynthesis; L-histidine biosynthesis; L-histidine from 5-phospho-alpha-D-ribose 1-diphosphate: step 5/9. Functionally, IGPS catalyzes the conversion of PRFAR and glutamine to IGP, AICAR and glutamate. The HisF subunit catalyzes the cyclization activity that produces IGP and AICAR from PRFAR using the ammonia provided by the HisH subunit. The protein is Imidazole glycerol phosphate synthase subunit HisF of Shewanella piezotolerans (strain WP3 / JCM 13877).